The primary structure comprises 329 residues: Diaminopimelate epimerase (329 aa).

Substrate is bound by residues Asn-14 and Asn-73. Cys-82 functions as the Proton donor in the catalytic mechanism. Substrate is bound by residues 83 to 84 (GN), Asn-170, Asn-206, and 224 to 225 (ER). Cys-233 (proton acceptor) is an active-site residue. Residue 234-235 (GT) coordinates substrate.

Belongs to the diaminopimelate epimerase family. Homodimer.

Its subcellular location is the cytoplasm. It catalyses the reaction (2S,6S)-2,6-diaminopimelate = meso-2,6-diaminopimelate. Its pathway is amino-acid biosynthesis; L-lysine biosynthesis via DAP pathway; DL-2,6-diaminopimelate from LL-2,6-diaminopimelate: step 1/1. Functionally, catalyzes the stereoinversion of LL-2,6-diaminopimelate (L,L-DAP) to meso-diaminopimelate (meso-DAP), a precursor of L-lysine and an essential component of the bacterial peptidoglycan. The sequence is that of Diaminopimelate epimerase from Listeria monocytogenes serovar 1/2a (strain ATCC BAA-679 / EGD-e).